The following is a 196-amino-acid chain: Peptide methionine sulfoxide reductase (196 aa).

The segment covering 1–14 (MEGNNSSSKSTTNP) has biased composition (polar residues). The disordered stretch occupies residues 1-23 (MEGNNSSSKSTTNPALDPDLDSP).

The protein belongs to the MsrA Met sulfoxide reductase family.

The catalysed reaction is L-methionyl-[protein] + [thioredoxin]-disulfide + H2O = L-methionyl-(S)-S-oxide-[protein] + [thioredoxin]-dithiol. It catalyses the reaction [thioredoxin]-disulfide + L-methionine + H2O = L-methionine (S)-S-oxide + [thioredoxin]-dithiol. Has an important function as a repair enzyme for proteins that have been inactivated by oxidation. Catalyzes the reversible oxidation-reduction of methionine sulfoxide in proteins to methionine. This chain is Peptide methionine sulfoxide reductase (E4), found in Solanum lycopersicum (Tomato).